The chain runs to 686 residues: LEAF RUST 10 DISEASE-RESISTANCE LOCUS RECEPTOR-LIKE PROTEIN KINASE-like 1.3 (686 aa).

Residues 1–33 (MFSPVLFRFSKPNSFLVLLFFLSYIHFLPCAQS) form the signal peptide. Residues 34–264 (QREPCDTLFR…AGLSKKGKIG (231 aa)) are Extracellular-facing. 5 N-linked (GlcNAc...) asparagine glycosylation sites follow: Asn-76, Asn-93, Asn-175, Asn-190, and Asn-236. A helical membrane pass occupies residues 265 to 285 (IGFASGFLGATLIGGCLLCIF). Residues 286–686 (IRRRKKLATQ…SSSNTTASSF (401 aa)) are Cytoplasmic-facing. The Protein kinase domain occupies 358–633 (ENFSKELGDG…DEIVEVLRVI (276 aa)). ATP is bound by residues 364–372 (LGDGGFGTV) and Lys-386. Tyr-432 is subject to Phosphotyrosine. Asp-482 (proton acceptor) is an active-site residue. Phosphoserine is present on Ser-515. Phosphothreonine is present on residues Thr-516 and Thr-521. Position 529 is a phosphotyrosine (Tyr-529). The segment at 657–686 (GLLKHGVPPPLSPETDKTTASSSNTTASSF) is disordered. Positions 674–686 (TTASSSNTTASSF) are enriched in low complexity.

Belongs to the protein kinase superfamily. Ser/Thr protein kinase family.

Its subcellular location is the cell membrane. It catalyses the reaction L-seryl-[protein] + ATP = O-phospho-L-seryl-[protein] + ADP + H(+). It carries out the reaction L-threonyl-[protein] + ATP = O-phospho-L-threonyl-[protein] + ADP + H(+). This is LEAF RUST 10 DISEASE-RESISTANCE LOCUS RECEPTOR-LIKE PROTEIN KINASE-like 1.3 from Arabidopsis thaliana (Mouse-ear cress).